A 238-amino-acid polypeptide reads, in one-letter code: MADLQTQMKQAVAAAAVEQIKDGMVLGLGSGSTAALMIQALGAKLASGELREIVGVTTSFQGEVMAAELGIPLRNLTAVDRIDLAIDGADEVDPSFQLIKGGGACHVQEKLVASRADRFVVVVDSTKIVDRLNLGFLLPVEVLPGAWRQVQGRLAELGGIADLRMAQCKAGPVVTDQGNLVLDVSMAGGIGDPEDLECRINNLPGVLENGLFVNLTDEVLVGQISDGVAGVRRLQRRE.

Residues 30–33 (SGST), 87–90 (DGAD), and 100–103 (KGGG) each bind substrate. The active-site Proton acceptor is the E109. Residue K127 participates in substrate binding.

It belongs to the ribose 5-phosphate isomerase family. Homodimer.

It catalyses the reaction aldehydo-D-ribose 5-phosphate = D-ribulose 5-phosphate. It functions in the pathway carbohydrate degradation; pentose phosphate pathway; D-ribose 5-phosphate from D-ribulose 5-phosphate (non-oxidative stage): step 1/1. Catalyzes the reversible conversion of ribose-5-phosphate to ribulose 5-phosphate. The polypeptide is Ribose-5-phosphate isomerase A (Prochlorococcus marinus (strain MIT 9303)).